Reading from the N-terminus, the 248-residue chain is PF03932 family protein CutC (248 aa).

This sequence belongs to the CutC family. In terms of assembly, homodimer.

Its subcellular location is the cytoplasm. This chain is PF03932 family protein CutC, found in Shigella dysenteriae serotype 1 (strain Sd197).